A 553-amino-acid polypeptide reads, in one-letter code: Heterochromatin protein 1-binding protein 3 (553 aa).

The residue at position 2 (Ala2) is an N-acetylalanine. Ser6 carries the post-translational modification Phosphoserine. A disordered region spans residues 30–131; the sequence is LGEKADDSTM…SKEKEKKVKK (102 aa). Thr51 is subject to Phosphothreonine. The span at 60 to 71 shows a compositional bias: acidic residues; the sequence is GEEEKPEPDGSS. Lys64 participates in a covalent cross-link: Glycyl lysine isopeptide (Lys-Gly) (interchain with G-Cter in SUMO2). Position 85 is a phosphothreonine (Thr85). Over residues 91–127 the composition is skewed to basic and acidic residues; sequence REAEQPKGEPESGEKEESKSAEETKKEEKDQSKEKEK. Residue Lys97 forms a Glycyl lysine isopeptide (Lys-Gly) (interchain with G-Cter in SUMO2) linkage. Phosphoserine is present on residues Ser142, Ser155, and Ser156. Positions 157 to 232 constitute an H15 1 domain; it reads PRPKMDAILT…GASGSFVVVQ (76 aa). N6-acetyllysine is present on Lys190. The disordered stretch occupies residues 231–251; sequence VQKSKTPQKSKNRKKGSAVDP. A compositionally biased stretch (basic residues) spans 236–246; that stretch reads TPQKSKNRKKG. A Phosphoserine modification is found at Ser247. A PxVxL motif motif is present at residues 253–257; sequence PQVKL. H15 domains are found at residues 253–328 and 335–411; these read PQVK…QLKK and LGGS…QLCF. A Glycyl lysine isopeptide (Lys-Gly) (interchain with G-Cter in SUMO2) cross-link involves residue Lys256. The segment at 422–553 is disordered; the sequence is PKKVSDGSED…MKKKSFKTKK (132 aa). The span at 428–449 shows a compositional bias: acidic residues; that stretch reads GSEDEDEEEDEEESSEDSEDEE. Ser441, Ser442, and Ser445 each carry phosphoserine. 2 stretches are compositionally biased toward basic residues: residues 488–509 and 542–553; these read GKVR…RKGR and SAMKKKSFKTKK.

Interacts (via PxVxL motif) with CBX5.

It localises to the nucleus. The protein localises to the chromosome. Functionally, component of heterochromatin that maintains heterochromatin integrity during G1/S progression and regulates the duration of G1 phase to critically influence cell proliferative capacity. May play a role in hypoxia-induced oncogenesis. This is Heterochromatin protein 1-binding protein 3 (Hp1bp3) from Rattus norvegicus (Rat).